The following is a 448-amino-acid chain: Phosphohexose mutases (448 aa).

The Phosphoserine intermediate role is filled by Ser97. Ser97, Asp237, Asp239, and Asp241 together coordinate Mg(2+).

This sequence belongs to the phosphohexose mutase family. Requires Mg(2+) as cofactor.

The catalysed reaction is alpha-D-glucose 1-phosphate = alpha-D-glucose 6-phosphate. It carries out the reaction alpha-D-mannose 1-phosphate = D-mannose 6-phosphate. It functions in the pathway nucleotide-sugar biosynthesis; GDP-alpha-D-mannose biosynthesis; alpha-D-mannose 1-phosphate from D-fructose 6-phosphate: step 2/2. Its function is as follows. Involved in xanthan production. This is Phosphohexose mutases (xanA) from Xanthomonas campestris pv. campestris (strain ATCC 33913 / DSM 3586 / NCPPB 528 / LMG 568 / P 25).